A 617-amino-acid polypeptide reads, in one-letter code: Protein fem-1 homolog C (617 aa).

Met-1 carries the N-acetylmethionine modification. ANK repeat units lie at residues 2–31 (DLKT…KEEV), 40–70 (NGAT…SIEV), 82–111 (EGAP…SVNN), 115–144 (TNST…DLEV), 148–177 (HGHT…DVNR), 181–210 (KGNT…KMEK), and 213–242 (YGMT…TSKT). TPR repeat units follow at residues 245–279 (INAL…RYSD) and 338–371 (SYYI…QQSN). ANK repeat units follow at residues 481-523 (NNFS…DVNV) and 527-556 (DDNS…HFDA).

This sequence belongs to the fem-1 family. Component of a Cul2-RING (CRL2) E3 ubiquitin-protein ligase complex, also named ECS (Elongin BC-CUL2/5-SOCS-box protein) complex, composed of CUL2, Elongin BC (ELOB and ELOC), RBX1 and substrate-specific adapter FEM1C. Widely expressed. Highly expressed in kidney, cardiac tissue, skeletal muscle and testis. Expressed at lower levels in other tissues, including cartilage.

It functions in the pathway protein modification; protein ubiquitination. In terms of biological role, substrate-recognition component of a Cul2-RING (CRL2) E3 ubiquitin-protein ligase complex of the DesCEND (destruction via C-end degrons) pathway, which recognizes a C-degron located at the extreme C terminus of target proteins, leading to their ubiquitination and degradation. The C-degron recognized by the DesCEND pathway is usually a motif of less than ten residues and can be present in full-length proteins, truncated proteins or proteolytically cleaved forms. The CRL2(FEM1C) complex specifically recognizes proteins with an arginine at the C-terminus: recognizes and binds proteins ending with -Lys/Arg-Xaa-Arg and -Lys/Arg-Xaa-Xaa-Arg C-degrons, such as SIL1 or OR51B2, leading to their ubiquitination and degradation. The CRL2(FEM1C) complex mediates ubiquitination and degradation of truncated MSRB1/SEPX1 selenoproteins produced by failed UGA/Sec decoding. Promotes ubiquitination and degradation of SLBP. The protein is Protein fem-1 homolog C of Homo sapiens (Human).